Here is a 416-residue protein sequence, read N- to C-terminus: Counting factor 60 (416 aa).

The first 22 residues, 1 to 22 (MIKKSALITLFLVSLILGVSLS), serve as a signal peptide directing secretion. 5 N-linked (GlcNAc...) asparagine glycosylation sites follow: asparagine 110, asparagine 218, asparagine 231, asparagine 318, and asparagine 411.

It belongs to the histidine acid phosphatase family. Component of the counting factor (CF) complex, which includes cf60, cf50, cf45-1 and ctnA.

It is found in the secreted. Cell-counting factor that limits the maximum size of the multicellular structure. Does not possess acid phosphatase activity. Cells with decreased levels of this protein form large groups while cells overexpressing this protein form small groups. The sequence is that of Counting factor 60 (cf60) from Dictyostelium discoideum (Social amoeba).